The following is a 219-amino-acid chain: MCAAEARPARVAMLGGTFDPVHMGHLRSAVELREALELDRVHMVPARVPPHRATPGVSAERRAALLALGIGDTPGLAVDDREIARDGPSYSADTLASLREELGPQARLVMALGHDAYLNLAEWHEPQRLFDLAHIVVIDRPDHDRPLAPALQELVAGREVSDVETLMQAPAGSLLALRLPTRMAISATSIRERLRRGDSIRYLVPEAVERDLLARGLYA.

It belongs to the NadD family.

The enzyme catalyses nicotinate beta-D-ribonucleotide + ATP + H(+) = deamido-NAD(+) + diphosphate. It functions in the pathway cofactor biosynthesis; NAD(+) biosynthesis; deamido-NAD(+) from nicotinate D-ribonucleotide: step 1/1. In terms of biological role, catalyzes the reversible adenylation of nicotinate mononucleotide (NaMN) to nicotinic acid adenine dinucleotide (NaAD). This chain is Probable nicotinate-nucleotide adenylyltransferase, found in Chromohalobacter salexigens (strain ATCC BAA-138 / DSM 3043 / CIP 106854 / NCIMB 13768 / 1H11).